Consider the following 204-residue polypeptide: MGEAEVGGTGAPGDKGPGEAAPSPAEETVVWSPEVEVCLFHAMLGHKPVGVNRHFHMICIRDKFSQNIGRQVPSKVIWDHLSTMYDMQALHESEILPFPNPERNFVLPDEIIQEVREGKVVIEEEMKEEMKEDVDPHSGADDVFSSSGSLGKALEKSSKDKEKNSSDLGCKEGADKRKRSRVTDKVLTANSNPSSPSAAKRRRT.

Residues 1 to 15 (MGEAEVGGTGAPGDK) show a composition bias toward gly residues. Residues 1–27 (MGEAEVGGTGAPGDKGPGEAAPSPAEE) are disordered. Position 2 is an N-acetylglycine (G2). S23 is subject to Phosphoserine. K127 participates in a covalent cross-link: Glycyl lysine isopeptide (Lys-Gly) (interchain with G-Cter in SUMO2). Composition is skewed to basic and acidic residues over residues 128 to 140 (EEMK…HSGA) and 153 to 175 (ALEK…EGAD). Residues 128–204 (EEMKEDVDPH…SPSAAKRRRT (77 aa)) form a disordered region. Over residues 189–198 (ANSNPSSPSA) the composition is skewed to low complexity. 2 positions are modified to phosphoserine: S191 and S195.

The protein belongs to the EAF7 family. Component of the NuA4 histone acetyltransferase complex which contains the catalytic subunit KAT5/TIP60 and the subunits EP400, TRRAP/PAF400, BRD8/SMAP, EPC1, DMAP1/DNMAP1, RUVBL1/TIP49, RUVBL2, ING3, actin, ACTL6A/BAF53A, MORF4L1/MRG15, MORF4L2/MRGX, MRGBP, YEATS4/GAS41, VPS72/YL1 and MEAF6. MRGBP may interact directly with MORF4L1/MRG15 and MORF4L2/MRGX.

Its subcellular location is the nucleus. Functionally, component of the NuA4 histone acetyltransferase (HAT) complex which is involved in transcriptional activation of select genes principally by acetylation of nucleosomal histones H4 and H2A. This modification may both alter nucleosome - DNA interactions and promote interaction of the modified histones with other proteins which positively regulate transcription. This complex may be required for the activation of transcriptional programs associated with oncogene and proto-oncogene mediated growth induction, tumor suppressor mediated growth arrest and replicative senescence, apoptosis, and DNA repair. NuA4 may also play a direct role in DNA repair when recruited to sites of DNA damage. In Mus musculus (Mouse), this protein is MRG/MORF4L-binding protein (Mrgbp).